The following is a 150-amino-acid chain: 3-hydroxyacyl-[acyl-carrier-protein] dehydratase FabZ (150 aa).

Histidine 54 is an active-site residue.

Belongs to the thioester dehydratase family. FabZ subfamily.

It localises to the cytoplasm. It catalyses the reaction a (3R)-hydroxyacyl-[ACP] = a (2E)-enoyl-[ACP] + H2O. Involved in unsaturated fatty acids biosynthesis. Catalyzes the dehydration of short chain beta-hydroxyacyl-ACPs and long chain saturated and unsaturated beta-hydroxyacyl-ACPs. In Vibrio vulnificus (strain CMCP6), this protein is 3-hydroxyacyl-[acyl-carrier-protein] dehydratase FabZ.